A 308-amino-acid chain; its full sequence is Low density lipoprotein receptor adapter protein 1 (308 aa).

An N-acetylmethionine modification is found at methionine 1. Serine 14 is modified (phosphoserine). In terms of domain architecture, PID spans 41–195; that stretch reads LLEGMVFSLK…QEGGDVPGTR (155 aa). Positions 179 to 201 are disordered; that stretch reads EKREKANQEGGDVPGTRRDSTPS. Residues serine 198 and serine 201 each carry the phosphoserine modification. The Clathrin box motif lies at 211-215; it reads LLDLE. The tract at residues 248 to 275 is AP-2 complex binding; the sequence is WELDDGLDEAFSRLAQSRTNPQVLDTGL. Residues 256–265 carry the [DE]-X(1,2)-F-X-X-[FL]-X-X-X-R motif motif; the sequence is EAFSRLAQSR. The disordered stretch occupies residues 288-308; sequence PTDWDKPDSSGIDQDDDVFTF.

As to quaternary structure, interacts (via PID domain) with LDLR (via NPXY motif). Binds to soluble clathrin trimers. Interacts with AP2B1; the interaction mediates the association with the AP-2 complex. Interacts with VLDLR. Interacts with LRP2.

The protein resides in the cytoplasm. Its function is as follows. Adapter protein (clathrin-associated sorting protein (CLASP)) required for efficient endocytosis of the LDL receptor (LDLR) in polarized cells such as hepatocytes and lymphocytes, but not in non-polarized cells (fibroblasts). May be required for LDL binding and internalization but not for receptor clustering in coated pits. May facilitate the endocytosis of LDLR and LDLR-LDL complexes from coated pits by stabilizing the interaction between the receptor and the structural components of the pits. May also be involved in the internalization of other LDLR family members. Binds to phosphoinositides, which regulate clathrin bud assembly at the cell surface. Required for trafficking of LRP2 to the endocytic recycling compartment which is necessary for LRP2 proteolysis, releasing a tail fragment which translocates to the nucleus and mediates transcriptional repression. This Mus musculus (Mouse) protein is Low density lipoprotein receptor adapter protein 1.